The sequence spans 230 residues: Ureidoacrylate amidohydrolase RutB (230 aa).

Residue D24 is the Proton acceptor of the active site. Residue K133 is part of the active site. The active-site Nucleophile is the C166.

This sequence belongs to the isochorismatase family. RutB subfamily.

It carries out the reaction (Z)-3-ureidoacrylate + H2O + H(+) = (Z)-3-aminoacrylate + NH4(+) + CO2. The enzyme catalyses (Z)-3-ureidoacrylate + H2O = (Z)-3-aminoacrylate + carbamate + H(+). The catalysed reaction is (Z)-2-methylureidoacrylate + H2O + H(+) = (Z)-2-methylaminoacrylate + NH4(+) + CO2. In terms of biological role, hydrolyzes ureidoacrylate to form aminoacrylate and carbamate. The carbamate hydrolyzes spontaneously, thereby releasing one of the nitrogen atoms of the pyrimidine ring as ammonia and one of its carbon atoms as CO2. The protein is Ureidoacrylate amidohydrolase RutB of Escherichia coli (strain B / BL21-DE3).